A 348-amino-acid chain; its full sequence is D-erythrose-4-phosphate dehydrogenase (348 aa).

Residue 12-13 (RI) coordinates NAD(+). Substrate-binding positions include 154 to 156 (SCT), R200, 213 to 214 (TR), and R236. C155 functions as the Nucleophile in the catalytic mechanism. N318 lines the NAD(+) pocket.

The protein belongs to the glyceraldehyde-3-phosphate dehydrogenase family. Epd subfamily. As to quaternary structure, homotetramer.

It localises to the cytoplasm. It carries out the reaction D-erythrose 4-phosphate + NAD(+) + H2O = 4-phospho-D-erythronate + NADH + 2 H(+). It functions in the pathway cofactor biosynthesis; pyridoxine 5'-phosphate biosynthesis; pyridoxine 5'-phosphate from D-erythrose 4-phosphate: step 1/5. In terms of biological role, catalyzes the NAD-dependent conversion of D-erythrose 4-phosphate to 4-phosphoerythronate. In Erwinia tasmaniensis (strain DSM 17950 / CFBP 7177 / CIP 109463 / NCPPB 4357 / Et1/99), this protein is D-erythrose-4-phosphate dehydrogenase.